Consider the following 315-residue polypeptide: Outer membrane protease OmpP (315 aa).

The N-terminal stretch at 1–23 (MQTKLLAIMLAAPVVFSSQEASA) is a signal peptide. Active-site residues include Asp103, Asp105, Asp230, and His232.

This sequence belongs to the peptidase A26 family.

The protein resides in the cell outer membrane. In terms of biological role, protease; also acts as a receptor for bacteriophage Ox2. The polypeptide is Outer membrane protease OmpP (ompP) (Escherichia coli (strain K12)).